A 304-amino-acid chain; its full sequence is C-type lectin domain family 10 member A (304 aa).

Residues 1–35 lie on the Cytoplasmic side of the membrane; sequence MIYENLQNSRIEEKTQEPGKAPSQSFLWRILSWTH. Residues 36 to 56 form a helical; Signal-anchor for type II membrane protein membrane-spanning segment; that stretch reads LLLFSLGLSLLLLVVVSVIGS. Residues 57–304 lie on the Extracellular side of the membrane; it reads QNSQLRRDLG…ICEMKLAKES (248 aa). N-linked (GlcNAc...) asparagine glycosylation is found at Asn74 and Asn166. In terms of domain architecture, C-type lectin spans 172–298; the sequence is CCPLHWTEHE…QRTFRWICEM (127 aa). 3 disulfides stabilise this stretch: Cys173–Cys184, Cys201–Cys296, and Cys274–Cys288.

Homooligomer. Interacts with SIGLEC1, which may act as a counter-receptor for CLEC10A in lymph node. Detected in lymph node in the subcapsular sinus, interfollicular regions, T and B-cell boundary and in the areas surrounding high endothelial venules (at protein level). Expressed on the surface of activated macrophages. Expressed in heart, lung, testis, skeletal muscle, spleen, brain, kidney and thymus. Expressed in P388, RAW 264.7 and M1 cell lines.

The protein resides in the membrane. Recognizes terminal galactose and N-acetylgalactosamine units. May participate in the interaction between tumoricidal macrophages and tumor cells. Plays a role in the recruitment of inflammatory monocytes to adipose tissue in diet-induced obesity. The sequence is that of C-type lectin domain family 10 member A (Clec10a) from Mus musculus (Mouse).